The following is a 334-amino-acid chain: Beta-hexosaminidase (334 aa).

Substrate-binding positions include Asp-60, Arg-68, Arg-133, and 163-164; that span reads KH. His-176 functions as the Proton donor/acceptor in the catalytic mechanism. Asp-247 functions as the Nucleophile in the catalytic mechanism.

The protein belongs to the glycosyl hydrolase 3 family. NagZ subfamily.

The protein resides in the cytoplasm. The enzyme catalyses Hydrolysis of terminal non-reducing N-acetyl-D-hexosamine residues in N-acetyl-beta-D-hexosaminides.. Its pathway is cell wall biogenesis; peptidoglycan recycling. In terms of biological role, plays a role in peptidoglycan recycling by cleaving the terminal beta-1,4-linked N-acetylglucosamine (GlcNAc) from peptide-linked peptidoglycan fragments, giving rise to free GlcNAc, anhydro-N-acetylmuramic acid and anhydro-N-acetylmuramic acid-linked peptides. The polypeptide is Beta-hexosaminidase (Xanthomonas euvesicatoria pv. vesicatoria (strain 85-10) (Xanthomonas campestris pv. vesicatoria)).